A 331-amino-acid chain; its full sequence is Probable protein phosphatase 2C 1 (331 aa).

Residues 1–29 (MAASSTATRLSPPRLHAPTTPSPHLPLRR) are disordered. The region spanning 48–292 (THLIPHPRKA…DDITVIVAQV (245 aa)) is the PPM-type phosphatase domain. Mn(2+)-binding residues include aspartate 79, glycine 80, aspartate 210, and aspartate 283. The tract at residues 300 to 331 (DEGVDEEKGQGDEQGSAVAVASSEQKEDSITT) is disordered.

It belongs to the PP2C family. It depends on Mg(2+) as a cofactor. Mn(2+) is required as a cofactor.

The catalysed reaction is O-phospho-L-seryl-[protein] + H2O = L-seryl-[protein] + phosphate. It carries out the reaction O-phospho-L-threonyl-[protein] + H2O = L-threonyl-[protein] + phosphate. The chain is Probable protein phosphatase 2C 1 from Oryza sativa subsp. japonica (Rice).